We begin with the raw amino-acid sequence, 365 residues long: tRNA 2-selenouridine synthase (365 aa).

One can recognise a Rhodanese domain in the interval Leu15–Asp138. Cys98 acts as the S-selanylcysteine intermediate in catalysis.

Belongs to the SelU family. Monomer.

The enzyme catalyses 5-methylaminomethyl-2-thiouridine(34) in tRNA + selenophosphate + (2E)-geranyl diphosphate + H2O + H(+) = 5-methylaminomethyl-2-selenouridine(34) in tRNA + (2E)-thiogeraniol + phosphate + diphosphate. It carries out the reaction 5-methylaminomethyl-2-thiouridine(34) in tRNA + (2E)-geranyl diphosphate = 5-methylaminomethyl-S-(2E)-geranyl-thiouridine(34) in tRNA + diphosphate. It catalyses the reaction 5-methylaminomethyl-S-(2E)-geranyl-thiouridine(34) in tRNA + selenophosphate + H(+) = 5-methylaminomethyl-2-(Se-phospho)selenouridine(34) in tRNA + (2E)-thiogeraniol. The catalysed reaction is 5-methylaminomethyl-2-(Se-phospho)selenouridine(34) in tRNA + H2O = 5-methylaminomethyl-2-selenouridine(34) in tRNA + phosphate. Its function is as follows. Involved in the post-transcriptional modification of the uridine at the wobble position (U34) of tRNA(Lys), tRNA(Glu) and tRNA(Gln). Catalyzes the conversion of 2-thiouridine (S2U-RNA) to 2-selenouridine (Se2U-RNA). Acts in a two-step process involving geranylation of 2-thiouridine (S2U) to S-geranyl-2-thiouridine (geS2U) and subsequent selenation of the latter derivative to 2-selenouridine (Se2U) in the tRNA chain. This Shewanella piezotolerans (strain WP3 / JCM 13877) protein is tRNA 2-selenouridine synthase.